Reading from the N-terminus, the 1212-residue chain is Nucleolar protein 6 (1212 aa).

Disordered regions lie at residues 1 to 72 (MGKI…PVSI) and 1156 to 1212 (KREQ…KSLS). The span at 1197 to 1212 (LKRKSLIKSRPLKSLS) shows a compositional bias: basic residues.

Belongs to the NRAP family. As to quaternary structure, part of the small subunit (SSU) processome, composed of more than 70 proteins and the RNA chaperone small nucleolar RNA (snoRNA) U3.

It localises to the nucleus. Its subcellular location is the nucleolus. It is found in the chromosome. Functionally, part of the small subunit (SSU) processome, first precursor of the small eukaryotic ribosomal subunit. During the assembly of the SSU processome in the nucleolus, many ribosome biogenesis factors, an RNA chaperone and ribosomal proteins associate with the nascent pre-rRNA and work in concert to generate RNA folding, modifications, rearrangements and cleavage as well as targeted degradation of pre-ribosomal RNA by the RNA exosome. This chain is Nucleolar protein 6, found in Drosophila pseudoobscura pseudoobscura (Fruit fly).